Here is a 357-residue protein sequence, read N- to C-terminus: DNA primase small subunit PriS (357 aa).

Residues Asp105, Asp107, and Asp259 contribute to the active site.

This sequence belongs to the eukaryotic-type primase small subunit family. Heterodimer of a small subunit (PriS) and a large subunit (PriL). It depends on Mg(2+) as a cofactor. Mn(2+) serves as cofactor.

Its function is as follows. Catalytic subunit of DNA primase, an RNA polymerase that catalyzes the synthesis of short RNA molecules used as primers for DNA polymerase during DNA replication. The small subunit contains the primase catalytic core and has DNA synthesis activity on its own. Binding to the large subunit stabilizes and modulates the activity, increasing the rate of DNA synthesis while decreasing the length of the DNA fragments, and conferring RNA synthesis capability. The DNA polymerase activity may enable DNA primase to also catalyze primer extension after primer synthesis. May also play a role in DNA repair. The polypeptide is DNA primase small subunit PriS (Methanococcus maripaludis (strain DSM 14266 / JCM 13030 / NBRC 101832 / S2 / LL)).